A 590-amino-acid polypeptide reads, in one-letter code: DELLA protein GAI1 (590 aa).

Basic residues predominate over residues 1–10 (MKREYHHPHH). The interval 1 to 28 (MKREYHHPHHPTCSTSPTGKGKMWDADP) is disordered. The DELLA motif motif lies at 35 to 39 (DELLA). Residues 153–182 (HIEQPPQQPPAPPLYQRDNKRLKPTTSATA) are disordered. The region spanning 205-575 (VDSQETGIRL…RPLIATSAWQ (371 aa)) is the GRAS domain. The segment at 212–266 (IRLVHTLMACAEAVQQENLKLAEALVKQIGFLAVSQAGAMRKVATYFAEGLARRI) is leucine repeat I (LRI). Positions 284 to 349 (QMHFYETCPY…GGPPSFRLTG (66 aa)) are VHIID. The VHIID signature appears at 315 to 319 (VHVID). Residues 363–395 (EVGWKLAQLAETIHVEFEYRGFVANSLADLDAS) are leucine repeat II (LRII). The interval 405–496 (VAVNSVFELH…EVYLGQQICN (92 aa)) is PFYRE. Positions 413-417 (LHSLL) match the LXXLL motif motif. Positions 499–575 (ACEGPERVER…RPLIATSAWQ (77 aa)) are SAW.

It belongs to the GRAS family. DELLA subfamily. In terms of processing, phosphorylated. Post-translationally, ubiquitinated. Upon GA application it is ubiquitinated, leading to its subsequent degradation.

It localises to the nucleus. Probable transcriptional regulator that acts as a repressor of the gibberellin (GA) signaling pathway. Probably acts by participating in large multiprotein complexes that repress transcription of GA-inducible genes. Upon GA application, it is degraded by the proteasome, allowing the GA signaling pathway. This is DELLA protein GAI1 (GAI1) from Vitis vinifera (Grape).